A 43-amino-acid polypeptide reads, in one-letter code: Protein PsbN (43 aa).

Residues 3-23 (IATLVAIFISGLLVSFTGYAL) traverse the membrane as a helical segment.

The protein belongs to the PsbN family.

It localises to the plastid. The protein localises to the chloroplast thylakoid membrane. May play a role in photosystem I and II biogenesis. This chain is Protein PsbN, found in Euonymus alatus (Burning bush).